Reading from the N-terminus, the 261-residue chain is Putative diacylated glycolipid transporter LprF (261 aa).

The signal sequence occupies residues 1–38 (MNGLISQACGSHRPRRPSSLGAVAILIAATLFATVVAG). Residue Cys39 is the site of N-palmitoyl cysteine attachment. A lipid anchor (S-diacylglycerol cysteine) is attached at Cys39. Positions 42–61 (KPTTASSPSPGSPSPEAQQI) are disordered.

The protein belongs to the LppX/LprAFG lipoprotein family. As to quaternary structure, monomer. Modified by Lgt on Cys-39 with an S-linked diacylglycerol with a mixture of C16, C18 and C19 fatty acids (palmitic, stearic and tuberculostearic acid respectively), signal peptide is removed by LspA, modified by Lnt with an amide-linked mixture of C16 and C19 fatty acids.

The protein localises to the cell membrane. In terms of biological role, might be involved in transporting short diacylated glycolipids to the cell outer membrane. Binds glycolipids that contain a diacylated glycerophosphate or a diacylated phosphatidylinositol moiety with C14 and C16 chains (upon overexpression in M.smegmatis; M.smegmatis does not encode this gene). Overexpression in M.smegmatis increases the cell wall glycolipid LAM/LM ratio (lipoarabinomannan/lipomannan), suggesting perhaps this protein is involved in the preferential translocation of diacylated LAM to the outer cell membrane. Overexpressing M.smegmatis cells adhere less well to hexadecane droplets, indicating decrease in the hydrophobicity of the cell surface, and have a slightly increased resistance to the antibiotic ethambutol. The sequence is that of Putative diacylated glycolipid transporter LprF (lprF) from Mycobacterium bovis (strain ATCC BAA-935 / AF2122/97).